A 57-amino-acid chain; its full sequence is MFKYTRFERARIVGARALQIAMGAPILIDVPEGITPLDAALLEFEKGIIPLTVIRPS.

This sequence belongs to the archaeal Rpo6/eukaryotic RPB6 RNA polymerase subunit family. Part of the RNA polymerase complex.

It localises to the cytoplasm. It carries out the reaction RNA(n) + a ribonucleoside 5'-triphosphate = RNA(n+1) + diphosphate. Its function is as follows. DNA-dependent RNA polymerase (RNAP) catalyzes the transcription of DNA into RNA using the four ribonucleoside triphosphates as substrates. This is DNA-directed RNA polymerase subunit Rpo6 from Thermococcus onnurineus (strain NA1).